Here is a 312-residue protein sequence, read N- to C-terminus: Pyridoxal kinase (312 aa).

Met-1 is subject to N-acetylmethionine. The pyridoxal site is built by Ser-12 and Thr-47. Thr-47 lines the pyridoxal 5'-phosphate pocket. The residue at position 59 (Ser-59) is a Phosphoserine. Asp-113 contributes to the ATP binding site. Asp-113 serves as a coordination point for Na(+). Asp-118 contacts Mg(2+). Thr-148 is a Na(+) binding site. 150–153 (NQFE) is an ATP binding site. Ser-164 is modified (phosphoserine). Thr-186 contributes to the Na(+) binding site. An ATP-binding site is contributed by 186–187 (TS). Position 213 is a phosphoserine (Ser-213). Residues 226–228 (VEA) and Thr-233 contribute to the ATP site. 234–235 (GD) is a pyridoxal 5'-phosphate binding site. Asp-235 acts as the Proton acceptor in catalysis. A Phosphoserine modification is found at Ser-285.

The protein belongs to the pyridoxine kinase family. As to quaternary structure, homodimer. Zn(2+) is required as a cofactor. The cofactor is Mg(2+).

The protein resides in the cytoplasm. It is found in the cytosol. The enzyme catalyses pyridoxal + ATP = pyridoxal 5'-phosphate + ADP + H(+). It catalyses the reaction pyridoxamine + ATP = pyridoxamine 5'-phosphate + ADP + H(+). It carries out the reaction pyridoxine + ATP = pyridoxine 5'-phosphate + ADP + H(+). It participates in cofactor metabolism; pyridoxal 5'-phosphate salvage; pyridoxal 5'-phosphate from pyridoxal: step 1/1. The protein operates within cofactor metabolism; pyridoxal 5'-phosphate salvage; pyridoxine 5'-phosphate from pyridoxine: step 1/1. It functions in the pathway cofactor metabolism; pyridoxal 5'-phosphate salvage; pyridoxamine 5'-phosphate from pyridoxamine: step 1/1. Its activity is regulated as follows. Activity is increased in the presence of K(+)or Na(+). Functionally, catalyzes the phosphorylation of the dietary vitamin B6 vitamers pyridoxal (PL), pyridoxine (PN) and pyridoxamine (PM) to form pyridoxal 5'-phosphate (PLP), pyridoxine 5'-phosphate (PNP) and pyridoxamine 5'-phosphate (PMP), respectively. PLP is the active form of vitamin B6, and acts as a cofactor for over 140 different enzymatic reactions. This is Pyridoxal kinase from Mus musculus (Mouse).